We begin with the raw amino-acid sequence, 146 residues long: Horcolin (146 aa).

Residues methionine 1–glutamine 21 are disordered. Residues proline 4–proline 146 form the Jacalin-type lectin domain.

The protein belongs to the jacalin lectin family.

The protein resides in the secreted. It localises to the extracellular space. Its subcellular location is the apoplast. Mannose-specific lectin. Has a weak agglutinating activity against rabbit erythrocytes. In Hordeum vulgare (Barley), this protein is Horcolin.